The sequence spans 211 residues: FMN-dependent NADH:quinone oxidoreductase (211 aa).

Residues Ser10, 16–18 (STS), and 138–141 (TQGG) contribute to the FMN site.

The protein belongs to the azoreductase type 1 family. In terms of assembly, homodimer. Requires FMN as cofactor.

It carries out the reaction 2 a quinone + NADH + H(+) = 2 a 1,4-benzosemiquinone + NAD(+). The catalysed reaction is N,N-dimethyl-1,4-phenylenediamine + anthranilate + 2 NAD(+) = 2-(4-dimethylaminophenyl)diazenylbenzoate + 2 NADH + 2 H(+). Functionally, quinone reductase that provides resistance to thiol-specific stress caused by electrophilic quinones. Its function is as follows. Also exhibits azoreductase activity. Catalyzes the reductive cleavage of the azo bond in aromatic azo compounds to the corresponding amines. The chain is FMN-dependent NADH:quinone oxidoreductase from Frankia alni (strain DSM 45986 / CECT 9034 / ACN14a).